The primary structure comprises 239 residues: 2,3,4,5-tetrahydropyridine-2,6-dicarboxylate N-acetyltransferase (239 aa).

The protein belongs to the transferase hexapeptide repeat family. DapH subfamily.

The catalysed reaction is (S)-2,3,4,5-tetrahydrodipicolinate + acetyl-CoA + H2O = L-2-acetamido-6-oxoheptanedioate + CoA. It participates in amino-acid biosynthesis; L-lysine biosynthesis via DAP pathway; LL-2,6-diaminopimelate from (S)-tetrahydrodipicolinate (acetylase route): step 1/3. In terms of biological role, catalyzes the transfer of an acetyl group from acetyl-CoA to tetrahydrodipicolinate. The polypeptide is 2,3,4,5-tetrahydropyridine-2,6-dicarboxylate N-acetyltransferase (Staphylococcus saprophyticus subsp. saprophyticus (strain ATCC 15305 / DSM 20229 / NCIMB 8711 / NCTC 7292 / S-41)).